Consider the following 1107-residue polypeptide: Probable chromatin-remodeling complex ATPase chain (1107 aa).

Disordered stretches follow at residues 1–124 and 177–217; these read MAKP…KREK and GNQS…GSGG. Composition is skewed to acidic residues over residues 8 to 25, 33 to 43, 53 to 65, and 89 to 114; these read DEEEEEVSSSGEEEEEQS, GEEEDEEEEEA, GGEEEEVDEEEIE, and EGDEESQSTEDDEAVVGEDDDADEAE. The stretch at 121–147 forms a coiled coil; that stretch reads KREKARLKEMQKLKKQKIQEILDTQNA. The span at 183-193 shows a compositional bias: basic residues; the sequence is KKPRGRGRHAS. Residues 197-211 show a composition bias toward acidic residues; it reads EEEEDEEYLKEEEDA. The Helicase ATP-binding domain occupies 243 to 408; it reads IRLYENGING…WSLLNFLLPE (166 aa). 256–263 provides a ligand contact to ATP; that stretch reads DEMGLGKT. The DEAH box motif lies at 359 to 362; the sequence is DEAH. Positions 536–687 constitute a Helicase C-terminal domain; the sequence is LLDKLLPKLK…ALVIQQGRLA (152 aa). SANT domains lie at 877-929 and 978-1039; these read EGFA…ERYK and QNKG…DTLI. The stretch at 1029 to 1067 forms a coiled coil; sequence QELARRCDTLIRLVEKENQEYDEQERQARKDKRMAKNMT. The segment at 1049–1107 is disordered; that stretch reads YDEQERQARKDKRMAKNMTPTKRSALRVSEGETTPSNSFKRRRQSLMDDYVGSGRRKRG.

Belongs to the SNF2/RAD54 helicase family. ISWI subfamily.

The protein resides in the nucleus. In terms of biological role, possesses intrinsic ATP-dependent nucleosome-remodeling activity. Constitutes the catalytic subunit of several complexes capable of forming ordered nucleosome arrays on chromatin in vitro. The polypeptide is Probable chromatin-remodeling complex ATPase chain (Oryza sativa subsp. japonica (Rice)).